The chain runs to 258 residues: Transcriptional repressor AccR (258 aa).

Residues 6–61 (TQDRQAKIVELLRDEQFLAIGRLTEHFQISVATARRDLSELHEAGLLRRTHGGAVS) form the HTH deoR-type domain. Residues 23 to 42 (LAIGRLTEHFQISVATARRD) constitute a DNA-binding region (H-T-H motif).

Its function is as follows. Represses opine catabolism and conjugal transfer of the nopaline Ti plasmid pTiC58. This chain is Transcriptional repressor AccR (accR), found in Agrobacterium fabrum (strain C58 / ATCC 33970) (Agrobacterium tumefaciens (strain C58)).